Here is a 119-residue protein sequence, read N- to C-terminus: Holo-[acyl-carrier-protein] synthase (119 aa).

2 residues coordinate Mg(2+): Asp-7 and Glu-53.

The protein belongs to the P-Pant transferase superfamily. AcpS family. Mg(2+) serves as cofactor.

It localises to the cytoplasm. It carries out the reaction apo-[ACP] + CoA = holo-[ACP] + adenosine 3',5'-bisphosphate + H(+). Functionally, transfers the 4'-phosphopantetheine moiety from coenzyme A to a Ser of acyl-carrier-protein. The chain is Holo-[acyl-carrier-protein] synthase from Dehalococcoides mccartyi (strain ATCC BAA-2266 / KCTC 15142 / 195) (Dehalococcoides ethenogenes (strain 195)).